The sequence spans 377 residues: tRNA-splicing endonuclease subunit SEN2 (377 aa).

Residues 119–174 (ETEMTLEKVTQQRRLQRLEFKKERAKLERELLELRKKGGHIDEENILLEKQRESLR) are a coiled coil. Catalysis depends on residues Tyr289, His297, and Lys328.

This sequence belongs to the tRNA-intron endonuclease family. As to quaternary structure, heterotetramer composed of SEN2, SEN15, SEN34 and SEN54. Interacts directly with SEN54.

Its subcellular location is the nucleus. It is found in the endomembrane system. The protein resides in the mitochondrion outer membrane. The enzyme catalyses pretRNA = a 3'-half-tRNA molecule with a 5'-OH end + a 5'-half-tRNA molecule with a 2',3'-cyclic phosphate end + an intron with a 2',3'-cyclic phosphate and a 5'-hydroxyl terminus.. Its function is as follows. Constitutes one of the two catalytic subunit of the tRNA-splicing endonuclease complex, a complex responsible for identification and cleavage of the splice sites in pre-tRNA. It cleaves pre-tRNA at the 5'- and 3'-splice sites to release the intron. The products are an intron and two tRNA half-molecules bearing 2',3'-cyclic phosphate and 5'-OH termini. There are no conserved sequences at the splice sites, but the intron is invariably located at the same site in the gene, placing the splice sites an invariant distance from the constant structural features of the tRNA body. This subunit may anchor the endonuclease complex to the nuclear membrane. Probably carries the active site for 5'-splice site cleavage. This Saccharomyces cerevisiae (strain ATCC 204508 / S288c) (Baker's yeast) protein is tRNA-splicing endonuclease subunit SEN2 (SEN2).